Reading from the N-terminus, the 158-residue chain is Small ribosomal subunit protein uS7 (158 aa).

The protein belongs to the universal ribosomal protein uS7 family. Part of the 30S ribosomal subunit. Contacts proteins S9 and S11.

In terms of biological role, one of the primary rRNA binding proteins, it binds directly to 16S rRNA where it nucleates assembly of the head domain of the 30S subunit. Is located at the subunit interface close to the decoding center, probably blocks exit of the E-site tRNA. The sequence is that of Small ribosomal subunit protein uS7 from Granulibacter bethesdensis (strain ATCC BAA-1260 / CGDNIH1).